The chain runs to 335 residues: Acetyl-coenzyme A carboxylase carboxyl transferase subunit alpha (335 aa).

Positions 40–294 constitute a CoA carboxyltransferase C-terminal domain; it reads QLETLAARRR…KEAIEKHLNA (255 aa).

This sequence belongs to the AccA family. Acetyl-CoA carboxylase is a heterohexamer composed of biotin carboxyl carrier protein (AccB), biotin carboxylase (AccC) and two subunits each of ACCase subunit alpha (AccA) and ACCase subunit beta (AccD).

The protein localises to the cytoplasm. It carries out the reaction N(6)-carboxybiotinyl-L-lysyl-[protein] + acetyl-CoA = N(6)-biotinyl-L-lysyl-[protein] + malonyl-CoA. The protein operates within lipid metabolism; malonyl-CoA biosynthesis; malonyl-CoA from acetyl-CoA: step 1/1. Component of the acetyl coenzyme A carboxylase (ACC) complex. First, biotin carboxylase catalyzes the carboxylation of biotin on its carrier protein (BCCP) and then the CO(2) group is transferred by the carboxyltransferase to acetyl-CoA to form malonyl-CoA. This is Acetyl-coenzyme A carboxylase carboxyl transferase subunit alpha from Prochlorococcus marinus (strain MIT 9215).